Reading from the N-terminus, the 477-residue chain is MQVLHVCSEMFPLLKTGGLADVIGALPAAQIAEGIDTRVLLPAFPDIRRGVVDAQVVTRRDTFAGRITLLYGHFNGVGIYLIDAPHLYDRPGSPYHDTNQHAYTDNVLRFALLGWVGSEMASGLDPFWRPDVVHAHDWHAGLTPAYLAARGRPAKSVFTVHNLAYQGMFYSWHMNDIELPWSFYNMHGLEFNGQISFLKAGLYYADHITAVSPTYAREITEPQYAYGMEGLLRQRHHEGRLSGILNGVDDGIWSPQNDLLLPMRYDRDTLEEKAENKRQLQIAMGLKVDDKAPLFAVVSRLTSQKGLDLVLEALPGLLEQGGQLALLGAGDPVLQEGFLAAAAEHPGKVGVQIGYHEAFSHRIMGGADVILVPSRFEPCGLTQLYGLKYGTLPLVRRTGGLADTVSDSSLENLADGLATGFVFEDSNALSLLRAIRRAFVLWSRPSLWRYVQRQAMNMDFSWQVAANSYRELYQRLM.

Lys-15 provides a ligand contact to ADP-alpha-D-glucose.

The protein belongs to the glycosyltransferase 1 family. Bacterial/plant glycogen synthase subfamily.

The catalysed reaction is [(1-&gt;4)-alpha-D-glucosyl](n) + ADP-alpha-D-glucose = [(1-&gt;4)-alpha-D-glucosyl](n+1) + ADP + H(+). The protein operates within glycan biosynthesis; glycogen biosynthesis. Functionally, synthesizes alpha-1,4-glucan chains using ADP-glucose. The polypeptide is Glycogen synthase (Klebsiella pneumoniae (strain 342)).